The chain runs to 257 residues: RLA class II histocompatibility antigen, DP beta chain (257 aa).

The N-terminal stretch at 1–29 (MRPCRSLRTAALAVVLTVLLHPVALGRAT) is a signal peptide. Positions 30-120 (PGESEQNYLW…LFQGLPVLLQ (91 aa)) are beta-1. Topologically, residues 30–224 (PGESEQNYLW…KAQSDSARSK (195 aa)) are extracellular. 2 disulfide bridges follow: Cys-45-Cys-105 and Cys-143-Cys-199. The N-linked (GlcNAc...) asparagine glycan is linked to Asn-49. The segment at 121-214 (TQPRVSVSPS…SLDSPITVEW (94 aa)) is beta-2. Residues 123-211 (PRVSVSPSKK…EHPSLDSPIT (89 aa)) enclose the Ig-like C1-type domain. The interval 215–224 (KAQSDSARSK) is connecting peptide. A helical membrane pass occupies residues 225 to 245 (MLAGVGGLVLGLVSLAVGVFM). Topologically, residues 246–257 (HRRSKKAQQGCR) are cytoplasmic.

This sequence belongs to the MHC class II family.

It is found in the membrane. This chain is RLA class II histocompatibility antigen, DP beta chain, found in Oryctolagus cuniculus (Rabbit).